An 86-amino-acid polypeptide reads, in one-letter code: Heat shock factor-binding protein (86 aa).

The stretch at 34-63 forms a coiled coil; that stretch reads MSDSIITKIDDMGGRINELEQSINDLRAEM. Residues 42–52 form a required for interactions with heat shock factors (HSFs) region; that stretch reads IDDMGGRINEL. Positions 59-86 are disordered; it reads LRAEMGVEGTPPPASKSGDEPKTPASSS.

This sequence belongs to the HSBP1 family. In terms of assembly, homohexamer. Interacts with HSFA1A, HSFA1B and HSFA2. Mostly expressed in siliques and flowers, and, to a lower extent, in roots, stems and leaves.

The protein localises to the nucleus. It is found in the cytoplasm. It localises to the cytosol. Functionally, negative regulator of the heat shock (HS) response. Affects negatively HSFA1B DNA-binding capacity in vitro. Involved in acquired thermotolerance but not basal thermotolerance. Crucial for seed development, after fertilization and during embryogenesis. The chain is Heat shock factor-binding protein from Arabidopsis thaliana (Mouse-ear cress).